A 312-amino-acid polypeptide reads, in one-letter code: Ribosomal RNA small subunit methyltransferase H (312 aa).

S-adenosyl-L-methionine contacts are provided by residues 37-39 (GGH), Asp57, Phe83, and Asp104.

It belongs to the methyltransferase superfamily. RsmH family.

Its subcellular location is the cytoplasm. The catalysed reaction is cytidine(1402) in 16S rRNA + S-adenosyl-L-methionine = N(4)-methylcytidine(1402) in 16S rRNA + S-adenosyl-L-homocysteine + H(+). In terms of biological role, specifically methylates the N4 position of cytidine in position 1402 (C1402) of 16S rRNA. The chain is Ribosomal RNA small subunit methyltransferase H from Malacoplasma penetrans (strain HF-2) (Mycoplasma penetrans).